A 589-amino-acid chain; its full sequence is Ufm1-specific protease (589 aa).

The interval 1–22 (MTNSQTVSLIGPTQMAPQSTPP) is disordered. Residues cysteine 421, aspartate 545, and histidine 547 contribute to the active site.

It belongs to the peptidase C78 family. Interacts with odr-4. In terms of tissue distribution, expressed in head and tail neurons. Expressed in the amphid head neurons ADL, ASI, ASH, ASJ, ASG, ADF, ASK, AWA, AWB, AWC, and in two tail neurons, the phasmid tail neurons PHA and PHB.

The protein resides in the endoplasmic reticulum membrane. Its subcellular location is the cytoplasm. It localises to the perinuclear region. Its function is as follows. Thiol protease which recognizes and hydrolyzes the peptide bond at the C-terminal Gly of ufm-1, a ubiquitin-like modifier protein bound to a number of target proteins. Required, with oct-4, for the localization of a subset of 7 transmembrane domain odorant receptors, including odr-10, to the cilia of olfactory neurons AWA and AWC. Operates in aggregation behavior, and responses to oxygen levels. The polypeptide is Ufm1-specific protease (Caenorhabditis elegans).